A 179-amino-acid polypeptide reads, in one-letter code: Large ribosomal subunit protein uL5 (179 aa).

The protein belongs to the universal ribosomal protein uL5 family. In terms of assembly, part of the 50S ribosomal subunit; part of the 5S rRNA/L5/L18/L25 subcomplex. Contacts the 5S rRNA and the P site tRNA. Forms a bridge to the 30S subunit in the 70S ribosome.

Functionally, this is one of the proteins that bind and probably mediate the attachment of the 5S RNA into the large ribosomal subunit, where it forms part of the central protuberance. In the 70S ribosome it contacts protein S13 of the 30S subunit (bridge B1b), connecting the 2 subunits; this bridge is implicated in subunit movement. Contacts the P site tRNA; the 5S rRNA and some of its associated proteins might help stabilize positioning of ribosome-bound tRNAs. This Pelobacter propionicus (strain DSM 2379 / NBRC 103807 / OttBd1) protein is Large ribosomal subunit protein uL5.